Reading from the N-terminus, the 159-residue chain is Ribosomal RNA large subunit methyltransferase H (159 aa).

S-adenosyl-L-methionine is bound by residues Leu76, Gly108, and 127–132 (FSRMTF).

It belongs to the RNA methyltransferase RlmH family. Homodimer.

The protein resides in the cytoplasm. It carries out the reaction pseudouridine(1915) in 23S rRNA + S-adenosyl-L-methionine = N(3)-methylpseudouridine(1915) in 23S rRNA + S-adenosyl-L-homocysteine + H(+). In terms of biological role, specifically methylates the pseudouridine at position 1915 (m3Psi1915) in 23S rRNA. This Bacillus pumilus (strain SAFR-032) protein is Ribosomal RNA large subunit methyltransferase H.